The primary structure comprises 135 residues: Large ribosomal subunit protein bL19 (135 aa).

The protein belongs to the bacterial ribosomal protein bL19 family.

Functionally, this protein is located at the 30S-50S ribosomal subunit interface and may play a role in the structure and function of the aminoacyl-tRNA binding site. This chain is Large ribosomal subunit protein bL19, found in Protochlamydia amoebophila (strain UWE25).